Here is a 183-residue protein sequence, read N- to C-terminus: MDIDPYKEFGASVELFSFLASDFFPSVRDLLDTASALYRDALESPEHCTPNHTALRQAILCWGELMTLASWVGNNLEDPAARDLVVNYVNTNMGLKIRQLLWFHISCLTFGRETVLEYLVSFGVWIRTPPAYRPPNAPILSTLPETTVVRRRGRSPRRRTPSPRRRRSQSPRRRRSQSPASQC.

The disordered stretch occupies residues 136–183; the sequence is NAPILSTLPETTVVRRRGRSPRRRTPSPRRRRSQSPRRRRSQSPASQC. Over residues 149 to 176 the composition is skewed to basic residues; the sequence is VRRRGRSPRRRTPSPRRRRSQSPRRRRS. Residues S155, S162, and S170 each carry the phosphoserine; by host modification. A 1; half-length repeat occupies 155 to 161; that stretch reads SPRRRTP. The interval 155–177 is 3 X 8 AA repeats of S-P-R-R-R-[PR]-S-Q; it reads SPRRRTPSPRRRRSQSPRRRRSQ. The short motif at 158–175 is the Bipartite nuclear localization signal element; it reads RRTPSPRRRRSQSPRRRR. Repeat copies occupy residues 162-169 and 170-177. The interval 177-183 is RNA binding; the sequence is QSPASQC.

This sequence belongs to the orthohepadnavirus core antigen family. As to quaternary structure, homodimerizes, then multimerizes. Interacts with cytosol exposed regions of viral L glycoprotein present in the reticulum-to-Golgi compartment. Interacts with human FLNB. Phosphorylated form interacts with host importin alpha; this interaction depends on the exposure of the NLS, which itself depends upon genome maturation and/or phosphorylation of the capsid protein. Interacts with host NUP153. In terms of processing, phosphorylated by host SRPK1, SRPK2, and maybe protein kinase C or GAPDH. Phosphorylation is critical for pregenomic RNA packaging. Protein kinase C phosphorylation is stimulated by HBx protein and may play a role in transport of the viral genome to the nucleus at the late step during the viral replication cycle.

It is found in the virion. The protein resides in the host cytoplasm. Functionally, self assembles to form an icosahedral capsid. Most capsids appear to be large particles with an icosahedral symmetry of T=4 and consist of 240 copies of capsid protein, though a fraction forms smaller T=3 particles consisting of 180 capsid proteins. Entering capsids are transported along microtubules to the nucleus. Phosphorylation of the capsid is thought to induce exposure of nuclear localization signal in the C-terminal portion of the capsid protein that allows binding to the nuclear pore complex via the importin (karyopherin-) alpha and beta. Capsids are imported in intact form through the nuclear pore into the nuclear basket, where it probably binds NUP153. Only capsids that contain the mature viral genome can release the viral DNA and capsid protein into the nucleoplasm. Immature capsids get stuck in the basket. Capsids encapsulate the pre-genomic RNA and the P protein. Pre-genomic RNA is reverse-transcribed into DNA while the capsid is still in the cytoplasm. The capsid can then either be directed to the nucleus, providing more genomes for transcription, or bud through the endoplasmic reticulum to provide new virions. The chain is Capsid protein from Homo sapiens (Human).